The sequence spans 546 residues: Probable protein kinase UbiB (546 aa).

A Protein kinase domain is found at 124-502; sequence DFDIQPLASA…HVRQSQSRYL (379 aa). Residues 130 to 138 and Lys-153 contribute to the ATP site; that span reads LASASIAQV. Asp-288 serves as the catalytic Proton acceptor. The next 2 helical transmembrane spans lie at 501–521 and 522–542; these read YLLG…VNRP and EWGL…LVGW.

The protein belongs to the ABC1 family. UbiB subfamily.

Its subcellular location is the cell inner membrane. The protein operates within cofactor biosynthesis; ubiquinone biosynthesis [regulation]. Functionally, is probably a protein kinase regulator of UbiI activity which is involved in aerobic coenzyme Q (ubiquinone) biosynthesis. This is Probable protein kinase UbiB from Salmonella agona (strain SL483).